Here is a 236-residue protein sequence, read N- to C-terminus: MPPRELSEAEPPPLPASTPPPRRRSAPPELGIKCVLVGDGAVGKSSLIVSYTCNGYPARYRPTALDTFSVQVLVDGAPVRIELWDTAGQEDFDRLRSLCYPDTDVFLACFSVVQPSSFQNITEKWLPEIRTHNPQAPVLLVGTQADLRDDVNVLIQLDQGGREGPVPQPQAQGLAEKIRACCYLECSALTQKNLKEVFDSAILSAIEHKARLEKKLNAKGVRTLSRCRWKKFFCFV.

The tract at residues 1 to 27 (MPPRELSEAEPPPLPASTPPPRRRSAP) is disordered. Pro residues predominate over residues 10–20 (EPPPLPASTPP). Ser-25 carries the phosphoserine modification. Residues 38–45 (GDGAVGKS), 85–89 (DTAGQ), and 143–146 (TQAD) each bind GTP. Residue Cys-234 is the site of S-palmitoyl cysteine attachment.

Belongs to the small GTPase superfamily. Rho family. Interacts with PAK2. The cofactor is Mg(2+).

Its subcellular location is the cell membrane. It is found in the endosome membrane. Functionally, plays a role in the control of the actin cytoskeleton via activation of the JNK pathway. The polypeptide is Rho-related GTP-binding protein RhoV (Mus musculus (Mouse)).